A 668-amino-acid polypeptide reads, in one-letter code: DNA ligase (668 aa).

NAD(+) is bound by residues 31–35, 80–81, and glutamate 112; these read DAEYD and SL. The active-site N6-AMP-lysine intermediate is the lysine 114. NAD(+) contacts are provided by arginine 135, glutamate 172, lysine 289, and lysine 313. 4 residues coordinate Zn(2+): cysteine 407, cysteine 410, cysteine 425, and cysteine 431. The BRCT domain occupies 591 to 668; sequence SVPQPLAGKV…NEEQLIELLN (78 aa).

Belongs to the NAD-dependent DNA ligase family. LigA subfamily. Mg(2+) is required as a cofactor. The cofactor is Mn(2+).

The catalysed reaction is NAD(+) + (deoxyribonucleotide)n-3'-hydroxyl + 5'-phospho-(deoxyribonucleotide)m = (deoxyribonucleotide)n+m + AMP + beta-nicotinamide D-nucleotide.. In terms of biological role, DNA ligase that catalyzes the formation of phosphodiester linkages between 5'-phosphoryl and 3'-hydroxyl groups in double-stranded DNA using NAD as a coenzyme and as the energy source for the reaction. It is essential for DNA replication and repair of damaged DNA. The chain is DNA ligase from Aliivibrio fischeri (strain MJ11) (Vibrio fischeri).